Consider the following 85-residue polypeptide: MKSQIFFAVAALFLLTVRTYASKSKEQDLRDALFSAMFSADNQLNPQERECRYWLGTCSKTGDCCSHLSCSPKHGWCVWDWTFRK.

The first 21 residues, 1–21, serve as a signal peptide directing secretion; the sequence is MKSQIFFAVAALFLLTVRTYA. The propeptide occupies 22–49; the sequence is SKSKEQDLRDALFSAMFSADNQLNPQER. 3 cysteine pairs are disulfide-bonded: Cys51-Cys65, Cys58-Cys70, and Cys64-Cys77.

Belongs to the neurotoxin 10 (Hwtx-1) family. 18 (Hntx-VII) subfamily. Expressed by the venom gland.

The protein localises to the secreted. Its function is as follows. Ion channel impairing toxin that inhibits voltage-gated sodium channels. The recombinantly expressed toxin shows a weak activity against Nav1.7/SCN9A, and shifts the voltage dependence of channel activation to more depolarized potentials. This chain is U5-theraphotoxin-Hhn1a, found in Cyriopagopus hainanus (Chinese bird spider).